A 328-amino-acid chain; its full sequence is Cytochrome c biogenesis protein CcsA (328 aa).

Helical transmembrane passes span 12-32 (HISFSVVSLLISIHLITLLLG), 45-65 (GMIITFFCITGLLVTRWIFSG), 72-92 (LYESLIFLSWTFSIFYMVLCL), 100-120 (FNTIITPSILFTQGFATSGLL), 145-165 (MILGYTTLLCGSLLSVAILVI), 234-254 (TISLGFIFLTVGNISGAVWAN), 263-283 (WDPKETWAFITWIIFAIYLHI), and 296-316 (IVASMGFLIIWICYLGINLLG).

It belongs to the CcmF/CycK/Ccl1/NrfE/CcsA family. May interact with Ccs1.

It localises to the plastid. It is found in the chloroplast thylakoid membrane. Required during biogenesis of c-type cytochromes (cytochrome c6 and cytochrome f) at the step of heme attachment. This chain is Cytochrome c biogenesis protein CcsA, found in Phaseolus vulgaris (Kidney bean).